A 210-amino-acid polypeptide reads, in one-letter code: ATP phosphoribosyltransferase (210 aa).

It belongs to the ATP phosphoribosyltransferase family. Short subfamily. In terms of assembly, heteromultimer composed of HisG and HisZ subunits.

The protein localises to the cytoplasm. It carries out the reaction 1-(5-phospho-beta-D-ribosyl)-ATP + diphosphate = 5-phospho-alpha-D-ribose 1-diphosphate + ATP. Its pathway is amino-acid biosynthesis; L-histidine biosynthesis; L-histidine from 5-phospho-alpha-D-ribose 1-diphosphate: step 1/9. Catalyzes the condensation of ATP and 5-phosphoribose 1-diphosphate to form N'-(5'-phosphoribosyl)-ATP (PR-ATP). Has a crucial role in the pathway because the rate of histidine biosynthesis seems to be controlled primarily by regulation of HisG enzymatic activity. This Petrotoga mobilis (strain DSM 10674 / SJ95) protein is ATP phosphoribosyltransferase.